Here is a 270-residue protein sequence, read N- to C-terminus: Phospholysine phosphohistidine inorganic pyrophosphate phosphatase (270 aa).

D19 and C21 together coordinate Mg(2+). Residues 19 to 21, 56 to 57, and K191 contribute to the substrate site; these read DMC and TN. Residue D216 coordinates Mg(2+).

Belongs to the HAD-like hydrolase superfamily. Mg(2+) is required as a cofactor.

It is found in the cytoplasm. The protein resides in the nucleus. It carries out the reaction diphosphate + H2O = 2 phosphate + H(+). Its function is as follows. Phosphatase that hydrolyzes imidodiphosphate, 3-phosphohistidine and 6-phospholysine. Has broad substrate specificity and can also hydrolyze inorganic diphosphate, but with lower efficiency. The sequence is that of Phospholysine phosphohistidine inorganic pyrophosphate phosphatase (lhpp) from Danio rerio (Zebrafish).